The following is a 231-amino-acid chain: NADH-ubiquinone oxidoreductase chain 4 (231 aa).

6 helical membrane passes run 1–21, 34–54, 63–85, 89–111, 128–148, and 169–189; these read PIAGSMVLAAILLKLGGYGII, MFLPFIVLALWGAILANLTCL, IAYSSISHMGLVVAAIIIQTPWG, AMALMIAHGFTSSALFCLANTTY, ILPMTTTWWLFVNLMNIAIPP, and TIIMLGLSMLITASYSLHMFL.

This sequence belongs to the complex I subunit 4 family.

The protein resides in the mitochondrion membrane. The catalysed reaction is a ubiquinone + NADH + 5 H(+)(in) = a ubiquinol + NAD(+) + 4 H(+)(out). In terms of biological role, core subunit of the mitochondrial membrane respiratory chain NADH dehydrogenase (Complex I) that is believed to belong to the minimal assembly required for catalysis. Complex I functions in the transfer of electrons from NADH to the respiratory chain. The immediate electron acceptor for the enzyme is believed to be ubiquinone. The sequence is that of NADH-ubiquinone oxidoreductase chain 4 (MT-ND4) from Deinagkistrodon acutus (Hundred-pace snake).